A 520-amino-acid polypeptide reads, in one-letter code: Glucose starvation modulator protein 1 (520 aa).

Positions 20-48 form a DNA-binding region, zn(2)-C6 fungal-type; the sequence is CSFCHSKHLQCSNNRPCKNCVKRNIADQC. 2 disordered regions span residues 63–104 and 194–213; these read AKNK…SSGR and PASP…PNEM. The span at 74–85 shows a compositional bias: low complexity; it reads SLESSSSPFSPL. A compositionally biased stretch (polar residues) spans 90 to 104; the sequence is INSQSSQPLDPSSGR. The PAS domain occupies 376–445; that stretch reads DYEKLSHLNS…FKLFKSVAVG (70 aa).

It belongs to the ERT1/acuK family.

The protein resides in the nucleus. In terms of biological role, transcription factor which regulates nonfermentable carbon utilization. The sequence is that of Glucose starvation modulator protein 1 (GSM1) from Meyerozyma guilliermondii (strain ATCC 6260 / CBS 566 / DSM 6381 / JCM 1539 / NBRC 10279 / NRRL Y-324) (Yeast).